The sequence spans 323 residues: Acetyl-coenzyme A carboxylase carboxyl transferase subunit alpha (323 aa).

In terms of domain architecture, CoA carboxyltransferase C-terminal spans 39–293 (RLSKKSQQLT…RRALADSLRQ (255 aa)).

This sequence belongs to the AccA family. In terms of assembly, acetyl-CoA carboxylase is a heterohexamer composed of biotin carboxyl carrier protein (AccB), biotin carboxylase (AccC) and two subunits each of ACCase subunit alpha (AccA) and ACCase subunit beta (AccD).

The protein resides in the cytoplasm. It carries out the reaction N(6)-carboxybiotinyl-L-lysyl-[protein] + acetyl-CoA = N(6)-biotinyl-L-lysyl-[protein] + malonyl-CoA. It functions in the pathway lipid metabolism; malonyl-CoA biosynthesis; malonyl-CoA from acetyl-CoA: step 1/1. In terms of biological role, component of the acetyl coenzyme A carboxylase (ACC) complex. First, biotin carboxylase catalyzes the carboxylation of biotin on its carrier protein (BCCP) and then the CO(2) group is transferred by the carboxyltransferase to acetyl-CoA to form malonyl-CoA. The sequence is that of Acetyl-coenzyme A carboxylase carboxyl transferase subunit alpha from Burkholderia lata (strain ATCC 17760 / DSM 23089 / LMG 22485 / NCIMB 9086 / R18194 / 383).